We begin with the raw amino-acid sequence, 185 residues long: Large ribosomal subunit protein uL30 (185 aa).

It belongs to the universal ribosomal protein uL30 family. In terms of assembly, part of the 50S ribosomal subunit.

This Caldivirga maquilingensis (strain ATCC 700844 / DSM 13496 / JCM 10307 / IC-167) protein is Large ribosomal subunit protein uL30.